The following is a 151-amino-acid chain: Macrodomain Ter protein (151 aa).

This sequence belongs to the MatP family. Homodimer.

Its subcellular location is the cytoplasm. Functionally, required for spatial organization of the terminus region of the chromosome (Ter macrodomain) during the cell cycle. Prevents early segregation of duplicated Ter macrodomains during cell division. Binds specifically to matS, which is a 13 bp signature motif repeated within the Ter macrodomain. The chain is Macrodomain Ter protein from Enterobacter sp. (strain 638).